The chain runs to 174 residues: Small ribosomal subunit protein uS5 (174 aa).

Residues 19–82 (LREKMIAINR…EEARRNMTKI (64 aa)) enclose the S5 DRBM domain.

The protein belongs to the universal ribosomal protein uS5 family. As to quaternary structure, part of the 30S ribosomal subunit. Contacts proteins S4 and S8.

With S4 and S12 plays an important role in translational accuracy. In terms of biological role, located at the back of the 30S subunit body where it stabilizes the conformation of the head with respect to the body. The protein is Small ribosomal subunit protein uS5 of Albidiferax ferrireducens (strain ATCC BAA-621 / DSM 15236 / T118) (Rhodoferax ferrireducens).